A 365-amino-acid chain; its full sequence is Outer membrane lipoprotein A (365 aa).

An N-terminal signal peptide occupies residues 1–19; sequence MNIATKLMASLVASVVLTA. The disordered stretch occupies residues 19-121; sequence ACSGGGSSGS…KGEELSKDKS (103 aa). Cys-20 carries N-palmitoyl cysteine lipidation. Cys-20 carries the S-diacylglycerol cysteine lipid modification. Basic and acidic residues-rich tracts occupy residues 48-68 and 105-121; these read EQPKKEEVPQADNSKAEEPKE and NPQKDAPKGEELSKDKS.

It localises to the cell outer membrane. In Actinobacillus pleuropneumoniae (Haemophilus pleuropneumoniae), this protein is Outer membrane lipoprotein A (omlA).